Here is a 178-residue protein sequence, read N- to C-terminus: MLDAFSRAAVSADSSGSFIGGGELASLKSFIADGNKRLDAVNAITSNASCIVSDAVAGICCENTGLTAPNGGVYTNRKMAACLRDGEIVLRYVSYALLAGDASVLQDRCLNGLRETYAALGVPTGSASRAVAIMKAAAGALITNTNSQPKKMPVTTGDCSNIAGEAASYFDMVISAIS.

C50 and C61 together coordinate phycourobilin. Positions 82 and 159 each coordinate (2R,3E)-phycoerythrobilin.

This sequence belongs to the phycobiliprotein family. As to quaternary structure, heterodimer of an alpha and a beta chain. Post-translationally, contains two covalently linked phycoerythrobilin chromophores and one covalently linked phycourobilin chromophore.

It is found in the cellular thylakoid membrane. Functionally, light-harvesting photosynthetic bile pigment-protein from the phycobiliprotein complex. This Synechococcus sp. (strain WH8103) protein is C-phycoerythrin class 2 subunit beta (mpeB).